Reading from the N-terminus, the 320-residue chain is Replication factor C small subunit 2 (320 aa).

Glycine 44–threonine 51 contacts ATP.

It belongs to the activator 1 small subunits family. RfcS subfamily. As to quaternary structure, heteromultimer composed of small subunits (RfcS) and large subunits (RfcL).

In terms of biological role, part of the RFC clamp loader complex which loads the PCNA sliding clamp onto DNA. This Pyrobaculum islandicum (strain DSM 4184 / JCM 9189 / GEO3) protein is Replication factor C small subunit 2.